A 220-amino-acid polypeptide reads, in one-letter code: Methylamine utilization ferredoxin-type protein MauM (220 aa).

4Fe-4S ferredoxin-type domains are found at residues 50–80 (ALPE…LAEM) and 88–120 (TPFF…RDIP). Residues cysteine 60, cysteine 63, cysteine 66, cysteine 70, cysteine 98, cysteine 101, cysteine 106, cysteine 110, cysteine 138, cysteine 146, cysteine 149, cysteine 153, cysteine 182, cysteine 185, cysteine 188, and cysteine 192 each coordinate [4Fe-4S] cluster. The 4Fe-4S ferredoxin-type 3 domain maps to 173–204 (VIPTVHSDKCTGCGTCEKHCVLGQAAIRVLPR).

Its pathway is one-carbon metabolism; methylamine degradation. Involved in electron transfer. The sequence is that of Methylamine utilization ferredoxin-type protein MauM (mauM) from Methylorubrum extorquens (strain ATCC 14718 / DSM 1338 / JCM 2805 / NCIMB 9133 / AM1) (Methylobacterium extorquens).